Here is a 482-residue protein sequence, read N- to C-terminus: Transcription termination/antitermination protein NusA (482 aa).

Residues 133 to 197 (NKVVIGYVQQ…NGIEVILSRT (65 aa)) form the S1 motif domain. The KH domain maps to 300 to 446 (LHKALVVVSD…NDNDESMEKV (147 aa)).

It belongs to the NusA family. As to quaternary structure, monomer. Binds directly to the core enzyme of the DNA-dependent RNA polymerase and to nascent RNA.

It is found in the cytoplasm. Participates in both transcription termination and antitermination. The chain is Transcription termination/antitermination protein NusA from Borreliella burgdorferi (strain ATCC 35210 / DSM 4680 / CIP 102532 / B31) (Borrelia burgdorferi).